Consider the following 420-residue polypeptide: Serine hydroxymethyltransferase (420 aa).

(6S)-5,6,7,8-tetrahydrofolate-binding positions include Leu121 and 125-127 (GHL). Lys229 bears the N6-(pyridoxal phosphate)lysine mark.

Belongs to the SHMT family. In terms of assembly, homodimer. Pyridoxal 5'-phosphate is required as a cofactor.

The protein resides in the cytoplasm. It catalyses the reaction (6R)-5,10-methylene-5,6,7,8-tetrahydrofolate + glycine + H2O = (6S)-5,6,7,8-tetrahydrofolate + L-serine. Its pathway is one-carbon metabolism; tetrahydrofolate interconversion. It functions in the pathway amino-acid biosynthesis; glycine biosynthesis; glycine from L-serine: step 1/1. In terms of biological role, catalyzes the reversible interconversion of serine and glycine with tetrahydrofolate (THF) serving as the one-carbon carrier. This reaction serves as the major source of one-carbon groups required for the biosynthesis of purines, thymidylate, methionine, and other important biomolecules. Also exhibits THF-independent aldolase activity toward beta-hydroxyamino acids, producing glycine and aldehydes, via a retro-aldol mechanism. The protein is Serine hydroxymethyltransferase of Streptomyces coelicolor (strain ATCC BAA-471 / A3(2) / M145).